A 235-amino-acid chain; its full sequence is Phosphate-specific transport system accessory protein PhoU homolog 2 (235 aa).

It belongs to the PhoU family. In terms of assembly, homodimer.

The protein localises to the cytoplasm. Its function is as follows. Plays a role in the regulation of phosphate uptake. The sequence is that of Phosphate-specific transport system accessory protein PhoU homolog 2 (phoU2) from Thermotoga maritima (strain ATCC 43589 / DSM 3109 / JCM 10099 / NBRC 100826 / MSB8).